A 372-amino-acid polypeptide reads, in one-letter code: Aminomethyltransferase (372 aa).

Belongs to the GcvT family. The glycine cleavage system is composed of four proteins: P, T, L and H.

The catalysed reaction is N(6)-[(R)-S(8)-aminomethyldihydrolipoyl]-L-lysyl-[protein] + (6S)-5,6,7,8-tetrahydrofolate = N(6)-[(R)-dihydrolipoyl]-L-lysyl-[protein] + (6R)-5,10-methylene-5,6,7,8-tetrahydrofolate + NH4(+). In terms of biological role, the glycine cleavage system catalyzes the degradation of glycine. The chain is Aminomethyltransferase from Synechocystis sp. (strain ATCC 27184 / PCC 6803 / Kazusa).